The sequence spans 142 residues: Hemoglobin subunit alpha-A (142 aa).

Residues 2-142 (VLSAADKTNV…VATVLTAKYR (141 aa)) enclose the Globin domain. His59 contacts O2. His88 is a binding site for heme b.

This sequence belongs to the globin family. In terms of assembly, heterotetramer of two alpha chains and two beta chains. Red blood cells.

Involved in oxygen transport from the lung to the various peripheral tissues. This is Hemoglobin subunit alpha-A (HBAA) from Apus apus (Common swift).